Here is a 931-residue protein sequence, read N- to C-terminus: Aconitate hydratase A (931 aa).

Positions 402–454 (SASPVDEASAESFPASDAPAYGSQENGAGAPQHADGTGAAVPSNPVTVTAPDG) are disordered. [4Fe-4S] cluster is bound by residues cysteine 472, cysteine 538, and cysteine 541.

This sequence belongs to the aconitase/IPM isomerase family. [4Fe-4S] cluster serves as cofactor.

It carries out the reaction citrate = D-threo-isocitrate. The enzyme catalyses citrate = cis-aconitate + H2O. It catalyses the reaction cis-aconitate + H2O = D-threo-isocitrate. It functions in the pathway carbohydrate metabolism; tricarboxylic acid cycle; isocitrate from oxaloacetate: step 2/2. In terms of biological role, catalyzes the reversible isomerization of citrate to isocitrate via cis-aconitate in the tricarboxylic acid (TCA) cycle. Aconitase activity is important for the initiation of morphological and physiological differentiation of S.viridochromogenes. In addition, the apo form of AcnA (lacking the [4Fe-4S] cluster) functions as a RNA-binding regulatory protein, which binds to iron responsive elements (IREs) located on the untranslated region of certain mRNAs, including recA and ftsZ. Binding to IRE-like structures probably alters the target mRNA stability and regulates the protein amount. The apo form plays a regulatory role in oxidative stress response. In Streptomyces viridochromogenes (strain DSM 40736 / JCM 4977 / BCRC 1201 / Tue 494), this protein is Aconitate hydratase A.